The following is a 133-amino-acid chain: Small ribosomal subunit protein uS9 (133 aa).

Positions 98–113 (RKPLKTEGHLSRDPRA) are enriched in basic and acidic residues. A disordered region spans residues 98 to 133 (RKPLKTEGHLSRDPRAKERRKYGLKKARKAPQFSKR). Over residues 114-133 (KERRKYGLKKARKAPQFSKR) the composition is skewed to basic residues.

The protein belongs to the universal ribosomal protein uS9 family.

The chain is Small ribosomal subunit protein uS9 from Parasynechococcus marenigrum (strain WH8102).